The chain runs to 672 residues: uncharacterized protein (672 aa).

The N-terminal stretch at 1-24 is a signal peptide; it reads MKTLKTLKIFIIICIASVSLASFA. 6 helical membrane passes run 226 to 246, 254 to 274, 410 to 430, 436 to 456, 469 to 489, and 562 to 582; these read IIGAALILYTMFFAFNMALNK, IALFVIKFLLVAYFSIGLGPL, IILAAGLVFSVIFLSILLYFI, CMITIYVMTYISPIFIPMALF, VCISCALQPAVVAGFIALLIT, and VVSILAELLCVLVFSVIFYYF. Residues 626–672 form a disordered region; it reads ASQGKPSVGDKPDVGGKRKEGEQQGGDSESGAGGGLADLASGSGGGK. Residues 633-647 show a composition bias toward basic and acidic residues; that stretch reads VGDKPDVGGKRKEGE. The segment covering 656-672 has biased composition (gly residues); the sequence is GAGGGLADLASGSGGGK.

This sequence belongs to the TrbL/VirB6 family.

Its subcellular location is the cell membrane. This is an uncharacterized protein from Rickettsia felis (strain ATCC VR-1525 / URRWXCal2) (Rickettsia azadi).